We begin with the raw amino-acid sequence, 411 residues long: NADH-quinone oxidoreductase subunit D (411 aa).

Belongs to the complex I 49 kDa subunit family. As to quaternary structure, NDH-1 is composed of 14 different subunits. Subunits NuoB, C, D, E, F, and G constitute the peripheral sector of the complex.

Its subcellular location is the cell inner membrane. The enzyme catalyses a quinone + NADH + 5 H(+)(in) = a quinol + NAD(+) + 4 H(+)(out). NDH-1 shuttles electrons from NADH, via FMN and iron-sulfur (Fe-S) centers, to quinones in the respiratory chain. The immediate electron acceptor for the enzyme in this species is believed to be ubiquinone. Couples the redox reaction to proton translocation (for every two electrons transferred, four hydrogen ions are translocated across the cytoplasmic membrane), and thus conserves the redox energy in a proton gradient. The chain is NADH-quinone oxidoreductase subunit D from Phenylobacterium zucineum (strain HLK1).